A 409-amino-acid polypeptide reads, in one-letter code: NADH-quinone oxidoreductase subunit D (409 aa).

Belongs to the complex I 49 kDa subunit family. NDH-1 is composed of 14 different subunits. Subunits NuoB, C, D, E, F, and G constitute the peripheral sector of the complex.

Its subcellular location is the cell inner membrane. It carries out the reaction a quinone + NADH + 5 H(+)(in) = a quinol + NAD(+) + 4 H(+)(out). Functionally, NDH-1 shuttles electrons from NADH, via FMN and iron-sulfur (Fe-S) centers, to quinones in the respiratory chain. The immediate electron acceptor for the enzyme in this species is believed to be ubiquinone. Couples the redox reaction to proton translocation (for every two electrons transferred, four hydrogen ions are translocated across the cytoplasmic membrane), and thus conserves the redox energy in a proton gradient. The protein is NADH-quinone oxidoreductase subunit D of Campylobacter curvus (strain 525.92).